Here is a 296-residue protein sequence, read N- to C-terminus: Bifunctional protein FolD (296 aa).

Residues 168–170 (GRS), threonine 197, and valine 238 each bind NADP(+).

It belongs to the tetrahydrofolate dehydrogenase/cyclohydrolase family. As to quaternary structure, homodimer.

It carries out the reaction (6R)-5,10-methylene-5,6,7,8-tetrahydrofolate + NADP(+) = (6R)-5,10-methenyltetrahydrofolate + NADPH. The catalysed reaction is (6R)-5,10-methenyltetrahydrofolate + H2O = (6R)-10-formyltetrahydrofolate + H(+). It functions in the pathway one-carbon metabolism; tetrahydrofolate interconversion. Functionally, catalyzes the oxidation of 5,10-methylenetetrahydrofolate to 5,10-methenyltetrahydrofolate and then the hydrolysis of 5,10-methenyltetrahydrofolate to 10-formyltetrahydrofolate. The polypeptide is Bifunctional protein FolD (Desulfotalea psychrophila (strain LSv54 / DSM 12343)).